A 78-amino-acid polypeptide reads, in one-letter code: Large ribosomal subunit protein bL28 (78 aa).

Belongs to the bacterial ribosomal protein bL28 family.

The chain is Large ribosomal subunit protein bL28 from Colwellia psychrerythraea (strain 34H / ATCC BAA-681) (Vibrio psychroerythus).